Consider the following 1346-residue polypeptide: Pikromycin polyketide synthase component PikAIV (1346 aa).

Positions 3–32 (SSNEQLVDALRASLKENEELRKESRRRADR) form a coiled coil. The region spanning 34–461 (QEPMAIVGMS…GTNAHVVLEE (428 aa)) is the Ketosynthase family 3 (KS3) domain. Residues 37–1332 (MAIVGMSCRF…HAPAVAEAVL (1296 aa)) form a module 6 region. Catalysis depends on for beta-ketoacyl synthase activity residues C207, H342, and H382. The tract at residues 562 to 844 (FVFPGQGTQW…VLTMTLPDKV (283 aa)) is acyltransferase. S652 acts as the Acyl-ester intermediate; for acyltransferase activity in catalysis. The Carrier domain maps to 945–1020 (SAVLAMVMRQ…ALAERISDEL (76 aa)). S980 bears the O-(pantetheine 4'-phosphoryl)serine mark. Residues 1028–1050 (AEPSDHEQAEEEKAAAPAGARSG) form a disordered region. Residues 1030–1041 (PSDHEQAEEEKA) are compositionally biased toward basic and acidic residues. T1125 is a substrate binding site. The tract at residues 1127-1332 (ANGGPHEFLR…HAPAVAEAVL (206 aa)) is thioesterase. The Nucleophile; for thioesterase activity role is filled by S1196. Substrate-binding residues include G1197 and D1224. Residue H1316 is the Proton acceptor; for thioesterase activity of the active site.

Homodimer. Pikromycin PKS consists of a combination of multimodular (PikAI and PikAII) and monomodular (PikAIII and PikAIV) polypeptides each coding for a functional synthase subunit which participates in 1 (monomodular) or 2 (multimodular) of the six FAS-like elongation steps required for formation of the polyketide. Module 1, 2, 3, 4, 5, and 6 participating in biosynthesis steps 1, 2, 3, 4, 5, and 6, respectively. It depends on pantetheine 4'-phosphate as a cofactor.

It catalyses the reaction 5 (S)-methylmalonyl-CoA + malonyl-CoA + 5 NADPH + 11 H(+) = 10-deoxymethynolide + 6 CO2 + 5 NADP(+) + 6 CoA + 2 H2O. The catalysed reaction is 6 (S)-methylmalonyl-CoA + malonyl-CoA + 5 NADPH + 12 H(+) = narbonolide + 7 CO2 + 5 NADP(+) + 7 CoA + 2 H2O. Its pathway is antibiotic biosynthesis. Irreversibly inhibited by (2S,3R,4S)-2,4-dihydroxy-3-methylhexyl-phosphonic acid and (3R,4S)-4-hydroxy-3-methyl-2-oxohexyl-phosphonic acid. Functionally, involved in the biosynthesis of 12- and 14-membered ring macrolactone antibiotics such as methymycin and neomethymycin, and pikromycin and narbomycin, respectively. Component of the pikromycin PKS which catalyzes the biosynthesis of both precursors 10-deoxymethynolide (12-membered ring macrolactone) and narbonolide (14-membered ring macrolactone). Chain elongation through PikAI, PikAII and PikAIII followed by thioesterase catalyzed termination results in the production of 10-deoxymethynolide, while continued elongation through PikAIV, followed by thioesterase (TE) catalyzed cyclization results in the biosynthesis of the narbonolide. The thioesterase can use a series of diketide-N-acetylcysteamine (SNAC) thioesters, but has a strong preference for the 2-methyl-3-ketopentanoyl-SNAC over the stereoisomers of 2-methyl-3-hydroxyacyl-SNAC. The polypeptide is Pikromycin polyketide synthase component PikAIV (Streptomyces venezuelae).